A 180-amino-acid polypeptide reads, in one-letter code: UPF0743 protein C215.06c (180 aa).

2 C2HC LYAR-type zinc fingers span residues Met1 to His26 and Gly27 to Met51. 8 residues coordinate Zn(2+): Cys6, Cys9, His21, Cys25, Cys32, Cys35, His47, and Cys50. The disordered stretch occupies residues Leu61 to Gln125. The segment covering Asn77–Ala95 has biased composition (polar residues). Ser85 carries the post-translational modification Phosphoserine. The segment covering His100–Asn111 has biased composition (basic and acidic residues).

This sequence belongs to the UPF0743 family.

Its subcellular location is the nucleus. This is UPF0743 protein C215.06c from Schizosaccharomyces pombe (strain 972 / ATCC 24843) (Fission yeast).